The primary structure comprises 311 residues: Nod factor export ATP-binding protein I (311 aa).

The 231-residue stretch at 13–243 (IDLAGVSKSY…QIGCPVIEIY (231 aa)) folds into the ABC transporter domain. Residue 45–52 (GPNGAGKS) coordinates ATP.

It belongs to the ABC transporter superfamily. Lipooligosaccharide exporter (TC 3.A.1.102) family. In terms of assembly, the complex is composed of two ATP-binding proteins (NodI) and two transmembrane proteins (NodJ).

The protein localises to the cell inner membrane. In terms of biological role, part of the ABC transporter complex NodIJ involved in the export of the nodulation factors (Nod factors), the bacterial signal molecules that induce symbiosis and subsequent nodulation induction. Nod factors are LCO (lipo-chitin oligosaccharide), a modified beta-1,4-linked N-acetylglucosamine oligosaccharide. This subunit is responsible for energy coupling to the transport system. The sequence is that of Nod factor export ATP-binding protein I from Rhizobium leguminosarum bv. viciae.